Reading from the N-terminus, the 1279-residue chain is Myosin-1 (1279 aa).

Basic residues predominate over residues 1–12 (MAIVKRGGRTRA). Residues 1–25 (MAIVKRGGRTRAKQQQAPAKVNNGL) form a disordered region. Residues 48 to 736 (VGVSDLTLLS…TLFALEDMRD (689 aa)) enclose the Myosin motor domain. Position 141–148 (141–148 (GESGAGKT)) interacts with ATP. The residue at position 371 (Ser371) is a Phosphoserine. Positions 419-502 (SIGILDIYGF…PGLFAALNDS (84 aa)) are actin-binding. IQ domains follow at residues 740-760 (HNMAARIQRAWRRYIKRKEDA) and 761-786 (AKTIQRAWRMKNHGNQFEQFRDYGNS). Residues 794 to 984 (RRRFSMLGSR…SGTVTVNQGL (191 aa)) enclose the TH1 domain. Composition is skewed to polar residues over residues 980 to 989 (VNQGLPPTSK) and 1018 to 1027 (AFQSQPTASY). Disordered stretches follow at residues 980–1001 (VNQGLPPTSKNPKRPRAKLGKV), 1014–1132 (LAQP…PKHP), 1189–1216 (SPSASAATQSYAPTTASSNPVSTASSNT), and 1253–1279 (LADALKKRQGVTRDDSDAEDDDDDDDW). Composition is skewed to low complexity over residues 1038 to 1056 (TQLYATQHQPQQPQVPTRT) and 1067 to 1095 (STQTAAQVSTLPQAARKPAAPARPAKKIA). Residues 1116-1126 (APPPPPPPPAL) show a composition bias toward pro residues. Residues 1129–1189 (PKHPTYRAMY…PIDYLQEESS (61 aa)) enclose the SH3 domain. Polar residues predominate over residues 1189-1209 (SPSASAATQSYAPTTASSNPV). Residues 1268 to 1279 (SDAEDDDDDDDW) are compositionally biased toward acidic residues.

This sequence belongs to the TRAFAC class myosin-kinesin ATPase superfamily. Myosin family. Post-translationally, phosphorylation of the TEDS site (Ser-371) is required for the polarization of the actin cytoskeleton. Phosphorylation probably activates the myosin-I ATPase activity.

The protein localises to the cytoplasm. The protein resides in the cytoskeleton. It is found in the actin patch. Type-I myosin implicated in the organization of the actin cytoskeleton. Required for proper actin cytoskeleton polarization. At the cell cortex, assembles in patch-like structures together with proteins from the actin-polymerizing machinery and promotes actin assembly. Functions as actin nucleation-promoting factor (NPF) for the Arp2/3 complex. The chain is Myosin-1 (MYO1) from Lodderomyces elongisporus (strain ATCC 11503 / CBS 2605 / JCM 1781 / NBRC 1676 / NRRL YB-4239) (Yeast).